The chain runs to 342 residues: N-acetyl-gamma-glutamyl-phosphate reductase (342 aa).

Cysteine 148 is a catalytic residue.

The protein belongs to the NAGSA dehydrogenase family. Type 1 subfamily.

The protein resides in the cytoplasm. It carries out the reaction N-acetyl-L-glutamate 5-semialdehyde + phosphate + NADP(+) = N-acetyl-L-glutamyl 5-phosphate + NADPH + H(+). Its pathway is amino-acid biosynthesis; L-arginine biosynthesis; N(2)-acetyl-L-ornithine from L-glutamate: step 3/4. In terms of biological role, catalyzes the NADPH-dependent reduction of N-acetyl-5-glutamyl phosphate to yield N-acetyl-L-glutamate 5-semialdehyde. This chain is N-acetyl-gamma-glutamyl-phosphate reductase, found in Methanococcus vannielii (strain ATCC 35089 / DSM 1224 / JCM 13029 / OCM 148 / SB).